The primary structure comprises 188 residues: Acireductone dioxygenase (188 aa).

Fe(2+) is bound by residues H97, H99, E103, and H141. Ni(2+)-binding residues include H97, H99, E103, and H141.

This sequence belongs to the acireductone dioxygenase (ARD) family. As to quaternary structure, monomer. The cofactor is Fe(2+). Ni(2+) is required as a cofactor.

The enzyme catalyses 1,2-dihydroxy-5-(methylsulfanyl)pent-1-en-3-one + O2 = 3-(methylsulfanyl)propanoate + CO + formate + 2 H(+). The catalysed reaction is 1,2-dihydroxy-5-(methylsulfanyl)pent-1-en-3-one + O2 = 4-methylsulfanyl-2-oxobutanoate + formate + 2 H(+). It functions in the pathway amino-acid biosynthesis; L-methionine biosynthesis via salvage pathway; L-methionine from S-methyl-5-thio-alpha-D-ribose 1-phosphate: step 5/6. Its function is as follows. Catalyzes 2 different reactions between oxygen and the acireductone 1,2-dihydroxy-3-keto-5-methylthiopentene (DHK-MTPene) depending upon the metal bound in the active site. Fe-containing acireductone dioxygenase (Fe-ARD) produces formate and 2-keto-4-methylthiobutyrate (KMTB), the alpha-ketoacid precursor of methionine in the methionine recycle pathway. Ni-containing acireductone dioxygenase (Ni-ARD) produces methylthiopropionate, carbon monoxide and formate, and does not lie on the methionine recycle pathway. The chain is Acireductone dioxygenase from Xanthomonas axonopodis pv. citri (strain 306).